Reading from the N-terminus, the 313-residue chain is Undecaprenyl-diphosphatase (313 aa).

Helical transmembrane passes span 121–141 (YRIG…GFLF), 152–172 (LWLV…AEHY), 187–207 (GLVM…RSGA), 225–245 (FSFL…LPDA), 259–279 (QLLV…AWLL), and 290–310 (FVGY…AGVI).

Belongs to the UppP family.

It is found in the cell membrane. It catalyses the reaction di-trans,octa-cis-undecaprenyl diphosphate + H2O = di-trans,octa-cis-undecaprenyl phosphate + phosphate + H(+). Its function is as follows. Catalyzes the dephosphorylation of undecaprenyl diphosphate (UPP). Confers resistance to bacitracin. This Nocardia farcinica (strain IFM 10152) protein is Undecaprenyl-diphosphatase.